A 265-amino-acid chain; its full sequence is Aquaporin-5 (265 aa).

Residues 1–12 (MKKEVCSLAFFK) lie on the Cytoplasmic side of the membrane. Residues 13-33 (AVFAEFLATLIFVFFGLGSAL) traverse the membrane as a helical segment. Residues 34–39 (KWPSAL) are Extracellular-facing. The helical transmembrane segment at 40–60 (PTILQISIAFGLAIGTLAQAL) threads the bilayer. Residues 61–65 (GPVSG) are Cytoplasmic-facing. Positions 66–74 (GHINPAITL) form an intramembrane region, discontinuously helical. The NPA 1 motif lies at 69–71 (NPA). Over 75–87 (ALLIGNQISLLRA) the chain is Cytoplasmic. The chain crosses the membrane as a helical span at residues 88 to 108 (VFYVAAQLVGAIAGAGILYWL). Residues 109–126 (APLNARGNLAVNALNNNT) lie on the Extracellular side of the membrane. An N-linked (GlcNAc...) asparagine glycan is attached at N124. The chain crosses the membrane as a helical span at residues 127 to 147 (TPGKAMVVELILTFQLALCIF). Residues 148–158 (SSTDSRRTSPV) are Cytoplasmic-facing. Residues 159–179 (GSPALSIGLSVTLGHLVGIYF) form a helical membrane-spanning segment. A topological domain (extracellular) is located at residue T180. Residues 181–191 (GCSMNPARSFG) constitute an intramembrane region (discontinuously helical). The short motif at 185 to 187 (NPA) is the NPA 2 element. Residues 192–203 (PAVVMNRFSPSH) are Extracellular-facing. The helical transmembrane segment at 204 to 224 (WVFWVGPIVGAMLAAILYFYL) threads the bilayer. Residues 225 to 265 (LFPSSLSLHDRVAVVKGTYEPEEDWEDHREERKKTIELTAH) are Cytoplasmic-facing.

The protein belongs to the MIP/aquaporin (TC 1.A.8) family. Homotetramer; each monomer provides an independent water pore. Interacts with TRPV4; the interaction is probably indirect and regulates TRPV4 activation by hypotonicity. Salivary glands, lacrimal glands, corneal epithelium in eye, trachea and lung.

Its subcellular location is the apical cell membrane. The protein localises to the cell membrane. It localises to the cytoplasmic vesicle membrane. The enzyme catalyses H2O(in) = H2O(out). Functionally, aquaporins form homotetrameric transmembrane channels, with each monomer independently mediating water transport across the plasma membrane along its osmotic gradient. Plays an important role in fluid secretion in salivary glands. Required for TRPV4 activation by hypotonicity. Together with TRPV4, controls regulatory volume decrease in salivary epithelial cells. Seems to play a redundant role in water transport in the eye, lung and in sweat glands. In Rattus norvegicus (Rat), this protein is Aquaporin-5.